We begin with the raw amino-acid sequence, 316 residues long: Neuroguidin-B (316 aa).

Disordered stretches follow at residues 124–169 (ENDP…SKVK) and 292–316 (VPFM…RRRH). Acidic residues predominate over residues 145–156 (DERESDSGEEGA). The segment covering 296-316 (KKSKKGPKKSKKKKGFSRRRH) has biased composition (basic residues).

The protein belongs to the SAS10 family. As to quaternary structure, part of the small subunit (SSU) processome, composed of more than 70 proteins and the RNA chaperone small nucleolar RNA (snoRNA) U3.

The protein resides in the nucleus. Its subcellular location is the nucleolus. The protein localises to the chromosome. It is found in the centromere. It localises to the cytoplasm. The protein resides in the cell projection. Its subcellular location is the axon. The protein localises to the dendrite. It is found in the filopodium. Its function is as follows. Part of the small subunit (SSU) processome, first precursor of the small eukaryotic ribosomal subunit. During the assembly of the SSU processome in the nucleolus, many ribosome biogenesis factors, an RNA chaperone and ribosomal proteins associate with the nascent pre-rRNA and work in concert to generate RNA folding, modifications, rearrangements and cleavage as well as targeted degradation of pre-ribosomal RNA by the RNA exosome. Its dissociation from the complex determines the transition from state pre-A1 to state pre-A1*. May inhibit mRNA translation. This Xenopus laevis (African clawed frog) protein is Neuroguidin-B (ngdn-b).